Consider the following 459-residue polypeptide: Cobyrinate a,c-diamide synthase (459 aa).

A GATase cobBQ-type domain is found at 249 to 446 (RIGMAFDEAF…VHTHFASRPG (198 aa)). The active-site Nucleophile is Cys332.

Belongs to the CobB/CbiA family. It depends on Mg(2+) as a cofactor.

It catalyses the reaction cob(II)yrinate + 2 L-glutamine + 2 ATP + 2 H2O = cob(II)yrinate a,c diamide + 2 L-glutamate + 2 ADP + 2 phosphate + 2 H(+). The protein operates within cofactor biosynthesis; adenosylcobalamin biosynthesis; cob(II)yrinate a,c-diamide from sirohydrochlorin (anaerobic route): step 10/10. In terms of biological role, catalyzes the ATP-dependent amidation of the two carboxylate groups at positions a and c of cobyrinate, using either L-glutamine or ammonia as the nitrogen source. The sequence is that of Cobyrinate a,c-diamide synthase from Syntrophotalea carbinolica (strain DSM 2380 / NBRC 103641 / GraBd1) (Pelobacter carbinolicus).